Here is a 1271-residue protein sequence, read N- to C-terminus: ATP-dependent helicase/nuclease subunit A (1271 aa).

In terms of domain architecture, UvrD-like helicase ATP-binding spans 3-476 (TKWTEEQELA…IMLYKNFRSR (474 aa)). Residue 24 to 31 (AAAGSGKT) coordinates ATP. The UvrD-like helicase C-terminal domain occupies 528–824 (IENLKVAGDI…RIMSIHKSKG (297 aa)).

This sequence belongs to the helicase family. AddA subfamily. As to quaternary structure, heterodimer of AddA and AddB/RexB. It depends on Mg(2+) as a cofactor.

The enzyme catalyses Couples ATP hydrolysis with the unwinding of duplex DNA by translocating in the 3'-5' direction.. It catalyses the reaction ATP + H2O = ADP + phosphate + H(+). Its function is as follows. The heterodimer acts as both an ATP-dependent DNA helicase and an ATP-dependent, dual-direction single-stranded exonuclease. Recognizes the chi site generating a DNA molecule suitable for the initiation of homologous recombination. The AddA nuclease domain is required for chi fragment generation; this subunit has the helicase and 3' -&gt; 5' nuclease activities. This chain is ATP-dependent helicase/nuclease subunit A, found in Clostridium perfringens (strain ATCC 13124 / DSM 756 / JCM 1290 / NCIMB 6125 / NCTC 8237 / Type A).